The following is a 461-amino-acid chain: Nucleobindin-1 (461 aa).

Positions 1-26 are cleaved as a signal peptide; it reads MPPSGPRGTLLLLPLLLLLLLRAVLA. The O-glycosylated at one site stretch occupies residues 42 to 51; the sequence is TESPDTGLYY. Ser-86 carries the post-translational modification Phosphoserine; by FAM20C. Residue Thr-148 is modified to Phosphothreonine; by FAM20C. Positions 150-218 form a coiled coil; sequence EARDLELLIQ…QQRRHREHPK (69 aa). A DNA-binding region spans residues 172 to 218; that stretch reads HHEEFKRYEMLKEHERRRYLESLGEEQRKEAERKLEEQQRRHREHPK. Residues 193–210 are compositionally biased toward basic and acidic residues; it reads SLGEEQRKEAERKLEEQQ. The disordered stretch occupies residues 193–221; it reads SLGEEQRKEAERKLEEQQRRHREHPKVNV. Positions 228-321 are binds to GNAI2 and GNAI3; sequence LKEVWEELDG…VTLEEFLAST (94 aa). 2 EF-hand domains span residues 240–275 and 292–327; these read PNRF…ELEK and ERLR…KEFG. Ca(2+)-binding residues include Asp-253, Asn-255, Asp-257, Glu-264, Asp-305, Asn-307, Asp-309, and Glu-316. Residues 303 to 333 carry the GBA motif; the sequence is NVDTNQDRLVTLEEFLASTQRKEFGDTGEGW. The stretch at 341–407 forms a coiled coil; the sequence is AYTEEELRRF…QRKQQQQQQQ (67 aa). Residues 368-461 form a disordered region; the sequence is LSQETEALGR…LPEVEVPQHL (94 aa). Residue Ser-369 is modified to Phosphoserine; by FAM20C. The span at 437–461 shows a compositional bias: basic and acidic residues; the sequence is DQKEVDTSEKKLLERLPEVEVPQHL.

It belongs to the nucleobindin family. As to quaternary structure, interacts (via GBA motif) with guanine nucleotide-binding protein G(i) alpha subunits GNAI1, GNAI2 and GNAI3 with higher affinity for GNAI1 and GNAI3 than for GNAI2. Preferentially interacts with inactive rather than active GNAI3. Interaction with GNAI3 is inhibited when NUCB1 binds calcium, probably due to a conformational change which renders the GBA motif inaccessible. Post-translationally, O-glycosylated. Expressed both in fetal and adult heart, lung, liver, kidney and brain, and in adult skeletal muscle, placenta and pancreas.

It localises to the golgi apparatus. Its subcellular location is the cis-Golgi network membrane. The protein localises to the cytoplasm. The protein resides in the secreted. Major calcium-binding protein of the Golgi which may have a role in calcium homeostasis. Acts as a non-receptor guanine nucleotide exchange factor which binds to and activates alpha subunits of guanine nucleotide-binding proteins (G proteins). This chain is Nucleobindin-1 (NUCB1), found in Homo sapiens (Human).